A 491-amino-acid polypeptide reads, in one-letter code: Probable diguanylate cyclase CdgI (491 aa).

Residues Met-1–Lys-54 lie on the Cytoplasmic side of the membrane. A helical membrane pass occupies residues Ala-55–Leu-75. The Periplasmic portion of the chain corresponds to Tyr-76–Asn-89. A helical membrane pass occupies residues Tyr-90–Met-110. The Cytoplasmic segment spans residues Lys-111–Thr-121. The helical transmembrane segment at Leu-122–Ile-142 threads the bilayer. Residues His-143–Asp-158 lie on the Periplasmic side of the membrane. The chain crosses the membrane as a helical span at residues Val-159 to Phe-179. Over Cys-180 to Lys-193 the chain is Cytoplasmic. The helical transmembrane segment at Thr-194–Leu-214 threads the bilayer. Over Ser-215–Thr-236 the chain is Periplasmic. Residues Trp-237 to Ile-257 form a helical membrane-spanning segment. Residues Met-258–Glu-265 lie on the Cytoplasmic side of the membrane. Residues Leu-266–Thr-286 traverse the membrane as a helical segment. Over Leu-287–Thr-293 the chain is Periplasmic. The chain crosses the membrane as a helical span at residues Ile-294–Ile-314. Residues Tyr-315–Ile-491 lie on the Cytoplasmic side of the membrane. In terms of domain architecture, GGDEF spans Lys-356 to Ile-491. Asp-364 and Ile-365 together coordinate Mg(2+). Asn-372, His-377, and Asp-381 together coordinate substrate. Glu-407 contributes to the Mg(2+) binding site. Glu-407 acts as the Proton acceptor in catalysis. Residue Arg-427 participates in substrate binding.

Homodimer. Mg(2+) is required as a cofactor.

It is found in the cell inner membrane. The catalysed reaction is 2 GTP = 3',3'-c-di-GMP + 2 diphosphate. The protein operates within purine metabolism; 3',5'-cyclic di-GMP biosynthesis. Functionally, catalyzes the synthesis of cyclic-di-GMP (c-di-GMP) via the condensation of 2 GTP molecules. The polypeptide is Probable diguanylate cyclase CdgI (Escherichia coli (strain K12)).